Here is a 426-residue protein sequence, read N- to C-terminus: Delta-aminolevulinic acid dehydratase, chloroplastic (426 aa).

Residues 1–45 (MASTVSFSPANVQMLQGRSCHGHAAFGGCSAVPRTGPRMRSVAVR) constitute a chloroplast transit peptide. Residues 74–107 (GRFPAPPPLVRPKAPEGTPQIRPLDLTKRPRRNR) form a disordered region. Lys293 (schiff-base intermediate with substrate) is an active-site residue. The 5-aminolevulinate site is built by Arg303 and Lys315. Glu331 contributes to the Mg(2+) binding site. Lys346 functions as the Schiff-base intermediate with substrate in the catalytic mechanism. Positions 372 and 411 each coordinate 5-aminolevulinate.

The protein belongs to the ALAD family. In terms of assembly, homooctamer. Requires Mg(2+) as cofactor.

It localises to the plastid. The protein resides in the chloroplast. It catalyses the reaction 2 5-aminolevulinate = porphobilinogen + 2 H2O + H(+). It functions in the pathway porphyrin-containing compound metabolism; protoporphyrin-IX biosynthesis; coproporphyrinogen-III from 5-aminolevulinate: step 1/4. In terms of biological role, catalyzes an early step in the biosynthesis of tetrapyrroles. Binds two molecules of 5-aminolevulinate per subunit, each at a distinct site, and catalyzes their condensation to form porphobilinogen. This chain is Delta-aminolevulinic acid dehydratase, chloroplastic (HEMB), found in Oryza sativa subsp. japonica (Rice).